The chain runs to 202 residues: Superoxide dismutase [Mn/Fe] (202 aa).

Positions 26, 80, 163, and 167 each coordinate Fe(3+). His-26, His-80, Asp-163, and His-167 together coordinate Mn(2+).

The protein belongs to the iron/manganese superoxide dismutase family. Homodimer. Mn(2+) serves as cofactor. Requires Fe(3+) as cofactor.

The catalysed reaction is 2 superoxide + 2 H(+) = H2O2 + O2. Destroys superoxide anion radicals which are normally produced within the cells and which are toxic to biological systems. Catalyzes the dismutation of superoxide anion radicals into O2 and H2O2 by successive reduction and oxidation of the transition metal ion at the active site. This chain is Superoxide dismutase [Mn/Fe] (sodB), found in Methylomonas sp. (strain J).